A 415-amino-acid polypeptide reads, in one-letter code: Esterase FrsA (415 aa).

It belongs to the FrsA family.

It carries out the reaction a carboxylic ester + H2O = an alcohol + a carboxylate + H(+). In terms of biological role, catalyzes the hydrolysis of esters. In Serratia proteamaculans (strain 568), this protein is Esterase FrsA.